The primary structure comprises 269 residues: Type II iodothyronine deiodinase (269 aa).

Residues 1 to 7 (MGLLSVD) lie on the Lumenal side of the membrane. A helical; Signal-anchor for type III membrane protein transmembrane segment spans residues 8-28 (LLITLQILPWFFSNCLFLALY). The Cytoplasmic segment spans residues 29–269 (DSVVLLKHVI…RUVPTCELIM (241 aa)). Sec128 is an active-site residue. 2 non-standard amino acids (selenocysteine) are found at residues Sec128 and Sec261.

It belongs to the iodothyronine deiodinase family. In terms of assembly, predominantly monomer. Can form homodimers but homodimerization is not essential for enzyme activity.

It localises to the endoplasmic reticulum membrane. It catalyses the reaction 3,3',5-triiodo-L-thyronine + iodide + A + H(+) = L-thyroxine + AH2. The enzyme catalyses 3,3'-diiodo-L-thyronine + iodide + A + H(+) = 3,3',5'-triiodo-L-thyronine + AH2. The catalysed reaction is 3'-iodo-L-thyronine + iodide + A + H(+) = 3',5'-diiodo-L-thyronine + AH2. It carries out the reaction 3,3'-diiodothyronamine + iodide + A + H(+) = 3,3',5'-triiodothyronamine + AH2. It catalyses the reaction 3'-iodothyronamine + iodide + A + H(+) = 3',5'-diiodothyronamine + AH2. In terms of biological role, plays a crucial role in the metabolism of thyroid hormones (TH) and has specific roles in TH activation and inactivation by deiodination. Catalyzes the deiodination of L-thyroxine (T4) to 3,5,3'-triiodothyronine (T3), 3,3',5'-triiodothyronine (rT3) to 3,3'-diiodothyronine (3,3'-T2) and 3',5'-diiodothyronine (3',5'-T2) to 3'-monoiodothyronine (3'-T1) via outer-ring deiodination (ORD). Catalyzes the phenolic ring deiodinations of 3,3',5'-triiodothyronamine and 3',5'- diiodothyronamine. This Neoceratodus forsteri (Australian lungfish) protein is Type II iodothyronine deiodinase (dio2).